Here is a 216-residue protein sequence, read N- to C-terminus: 3-isopropylmalate dehydratase small subunit (216 aa).

Belongs to the LeuD family. LeuD type 1 subfamily. In terms of assembly, heterodimer of LeuC and LeuD.

It catalyses the reaction (2R,3S)-3-isopropylmalate = (2S)-2-isopropylmalate. The protein operates within amino-acid biosynthesis; L-leucine biosynthesis; L-leucine from 3-methyl-2-oxobutanoate: step 2/4. Catalyzes the isomerization between 2-isopropylmalate and 3-isopropylmalate, via the formation of 2-isopropylmaleate. This is 3-isopropylmalate dehydratase small subunit from Marinomonas sp. (strain MWYL1).